The sequence spans 195 residues: Pyridoxal 5'-phosphate synthase subunit PdxT (195 aa).

L-glutamine is bound at residue 46 to 48; that stretch reads GES. C78 acts as the Nucleophile in catalysis. Residues R105 and 133 to 134 each bind L-glutamine; that span reads IR. Catalysis depends on charge relay system residues H169 and E171.

This sequence belongs to the glutaminase PdxT/SNO family. In terms of assembly, in the presence of PdxS, forms a dodecamer of heterodimers. Only shows activity in the heterodimer.

The catalysed reaction is aldehydo-D-ribose 5-phosphate + D-glyceraldehyde 3-phosphate + L-glutamine = pyridoxal 5'-phosphate + L-glutamate + phosphate + 3 H2O + H(+). It carries out the reaction L-glutamine + H2O = L-glutamate + NH4(+). It functions in the pathway cofactor biosynthesis; pyridoxal 5'-phosphate biosynthesis. Functionally, catalyzes the hydrolysis of glutamine to glutamate and ammonia as part of the biosynthesis of pyridoxal 5'-phosphate. The resulting ammonia molecule is channeled to the active site of PdxS. In Shouchella clausii (strain KSM-K16) (Alkalihalobacillus clausii), this protein is Pyridoxal 5'-phosphate synthase subunit PdxT.